The primary structure comprises 286 residues: Thymidylate synthase (286 aa).

Arg-21 contributes to the dUMP binding site. Asn-51 is a (6R)-5,10-methylene-5,6,7,8-tetrahydrofolate binding site. A dUMP-binding site is contributed by 150-151 (RR). The active-site Nucleophile is Cys-170. Residues 190–193 (RSAD), Asn-201, and 231–233 (HIY) each bind dUMP. Asp-193 serves as a coordination point for (6R)-5,10-methylene-5,6,7,8-tetrahydrofolate. Ala-285 is a (6R)-5,10-methylene-5,6,7,8-tetrahydrofolate binding site.

It belongs to the thymidylate synthase family. Bacterial-type ThyA subfamily. Homodimer.

The protein localises to the cytoplasm. The catalysed reaction is dUMP + (6R)-5,10-methylene-5,6,7,8-tetrahydrofolate = 7,8-dihydrofolate + dTMP. It functions in the pathway pyrimidine metabolism; dTTP biosynthesis. Its function is as follows. Catalyzes the reductive methylation of 2'-deoxyuridine-5'-monophosphate (dUMP) to 2'-deoxythymidine-5'-monophosphate (dTMP) while utilizing 5,10-methylenetetrahydrofolate (mTHF) as the methyl donor and reductant in the reaction, yielding dihydrofolate (DHF) as a by-product. This enzymatic reaction provides an intracellular de novo source of dTMP, an essential precursor for DNA biosynthesis. This Mycoplasmopsis pulmonis (strain UAB CTIP) (Mycoplasma pulmonis) protein is Thymidylate synthase.